The primary structure comprises 354 residues: Glutaminyl-peptide cyclotransferase (354 aa).

Residues Met-1–Tyr-8 constitute a mitochondrion transit peptide. Cys-136 and Cys-158 are disulfide-bonded. Asp-153 serves as a coordination point for Zn(2+). Glu-190 (proton acceptor) is an active-site residue. Position 191 (Glu-191) interacts with Zn(2+). Asp-228 serves as the catalytic Proton acceptor. His-318 is a Zn(2+) binding site.

The protein belongs to the glutaminyl-peptide cyclotransferase family.

Its subcellular location is the secreted. The protein localises to the mitochondrion. It carries out the reaction N-terminal L-glutaminyl-[peptide] = N-terminal 5-oxo-L-prolyl-[peptide] + NH4(+). With respect to regulation, inhibited by imidazoles (imidazole, benzimidazole, 1-benzylimidazole, 1-methylimidazole, P150/03 and N-omega-acetylhistamine) and cysteamines (cysteamine and N-dimethylcysteamine). Inhibited by PDB50 1(3,4-dimethoxyphenyl)-3-(3-imidazol-1-ylpropyl)thiourea. Its function is as follows. Acts as a glutaminyl-peptide cyclotransferase. Responsible for the biosynthesis of pyroglutamyl peptides. Might be more efficient in the conversion of tri and tetrapeptides in vitro. Might have a relative preference for substrates containing hydrophobic amino acids in vitro. In Drosophila melanogaster (Fruit fly), this protein is Glutaminyl-peptide cyclotransferase.